The chain runs to 230 residues: Ribosomal RNA small subunit methyltransferase G (230 aa).

S-adenosyl-L-methionine is bound by residues glycine 74, phenylalanine 79, 124 to 125, and arginine 141; that span reads AE.

It belongs to the methyltransferase superfamily. RNA methyltransferase RsmG family.

Its subcellular location is the cytoplasm. In terms of biological role, specifically methylates the N7 position of a guanine in 16S rRNA. This chain is Ribosomal RNA small subunit methyltransferase G, found in Acholeplasma laidlawii (strain PG-8A).